The chain runs to 189 residues: MKKSLFATGLAIAMALPLGAQAADYVIDTKGAHASINFKVSHLGYSFIKGRFNTFSGDFSFDEKNIADSKVNVVVDTTSLDSNHAERDKHIRSGDFIDAGKYSEATFKSTKVVDKGNGKLDVTGDLTLHGVTKPITIEAEFVGAGNDPWGGERAGFVGTTRLELADFDIPVMGSSSYVDMELHIEGVKK.

A signal peptide spans 1 to 22; sequence MKKSLFATGLAIAMALPLGAQA.

The protein belongs to the UPF0312 family. Type 1 subfamily.

It localises to the periplasm. The sequence is that of UPF0312 protein VPA0850 from Vibrio parahaemolyticus serotype O3:K6 (strain RIMD 2210633).